Here is a 60-residue protein sequence, read N- to C-terminus: Large ribosomal subunit protein uL30 (60 aa).

This sequence belongs to the universal ribosomal protein uL30 family. Part of the 50S ribosomal subunit.

This is Large ribosomal subunit protein uL30 from Carboxydothermus hydrogenoformans (strain ATCC BAA-161 / DSM 6008 / Z-2901).